We begin with the raw amino-acid sequence, 48 residues long: Large ribosomal subunit protein eL40 (48 aa).

This sequence belongs to the eukaryotic ribosomal protein eL40 family.

The sequence is that of Large ribosomal subunit protein eL40 from Methanospirillum hungatei JF-1 (strain ATCC 27890 / DSM 864 / NBRC 100397 / JF-1).